The primary structure comprises 162 residues: Peroxiredoxin-2B (162 aa).

The Thioredoxin domain maps to 4–162 (IAVGDVVPDG…SSADDILKAL (159 aa)). Catalysis depends on cysteine 51, which acts as the Cysteine sulfenic acid (-SOH) intermediate.

This sequence belongs to the peroxiredoxin family. Prx5 subfamily. Monomer. Expressed in all tissues but mostly in reproductive tissues such as buds, flowers, siliques and seeds.

It is found in the cytoplasm. The enzyme catalyses [glutaredoxin]-dithiol + a hydroperoxide = [glutaredoxin]-disulfide + an alcohol + H2O. Functionally, reduces hydrogen peroxide and alkyl hydroperoxides with reducing equivalents provided through the thioredoxin or glutaredoxin system. May be involved in intracellular redox signaling. In terms of biological role, thiol-specific peroxidase that catalyzes the reduction of hydrogen peroxide and organic hydroperoxides to water and alcohols, respectively. Plays a role in cell protection against oxidative stress by detoxifying peroxides and as sensor of hydrogen peroxide-mediated signaling events. The chain is Peroxiredoxin-2B (PRXIIB) from Arabidopsis thaliana (Mouse-ear cress).